The primary structure comprises 331 residues: Isopenicillin N synthase (331 aa).

Isopenicillin N-binding residues include arginine 87, tyrosine 91, serine 183, and tyrosine 189. Residues arginine 87, tyrosine 91, serine 183, tyrosine 189, histidine 214, and aspartate 216 each coordinate N-[(5S)-5-amino-5-carboxypentanoyl]-L-cysteinyl-D-valine. The Fe2OG dioxygenase domain occupies 176-288 (KPDDTLASVV…RQSLPFFVNL (113 aa)). Histidine 214, aspartate 216, and histidine 270 together coordinate Fe(2+). Position 279 (arginine 279) interacts with 2-oxoglutarate. Serine 281 provides a ligand contact to isopenicillin N. Serine 281 contacts N-[(5S)-5-amino-5-carboxypentanoyl]-L-cysteinyl-D-valine.

It belongs to the iron/ascorbate-dependent oxidoreductase family. In terms of assembly, monomer. Requires Fe(2+) as cofactor.

The protein resides in the cytoplasm. It localises to the cytosol. It catalyses the reaction N-[(5S)-5-amino-5-carboxypentanoyl]-L-cysteinyl-D-valine + O2 = isopenicillin N + 2 H2O. The protein operates within antibiotic biosynthesis; penicillin G biosynthesis; penicillin G from L-alpha-aminoadipate and L-cysteine and L-valine: step 2/3. Its function is as follows. Isopenicillin N synthase; part of the gene cluster that mediates the biosynthesis of penicillin, the world's most important antibiotic. IpnA catalyzes the cyclization of the tripeptide N-[(5S)-5-amino-5-carboxypentanoyl]-L-cysteinyl-D-valine (LLD-ACV or ACV) to form isopenicillin N (IPN) that contains the beta-lactam nucleus. The penicillin biosynthesis occurs via 3 enzymatic steps, the first corresponding to the production of the tripeptide N-[(5S)-5-amino-5-carboxypentanoyl]-L-cysteinyl-D-valine (LLD-ACV or ACV) by the NRPS acvA. The tripeptide ACV is then cyclized to isopenicillin N (IPN) by the isopenicillin N synthase ipnA that forms the beta-lactam nucleus. Finally, the alpha-aminoadipyl side chain is exchanged for phenylacetic acid by the isopenicillin N acyltransferase penDE to yield penicillin in the peroxisomal matrix. This Emericella nidulans (strain FGSC A4 / ATCC 38163 / CBS 112.46 / NRRL 194 / M139) (Aspergillus nidulans) protein is Isopenicillin N synthase.